Reading from the N-terminus, the 258-residue chain is Indole-3-glycerol phosphate synthase (258 aa).

The protein belongs to the TrpC family.

It catalyses the reaction 1-(2-carboxyphenylamino)-1-deoxy-D-ribulose 5-phosphate + H(+) = (1S,2R)-1-C-(indol-3-yl)glycerol 3-phosphate + CO2 + H2O. It participates in amino-acid biosynthesis; L-tryptophan biosynthesis; L-tryptophan from chorismate: step 4/5. The chain is Indole-3-glycerol phosphate synthase from Campylobacter jejuni subsp. doylei (strain ATCC BAA-1458 / RM4099 / 269.97).